Reading from the N-terminus, the 515-residue chain is Bifunctional purine biosynthesis protein PurH (515 aa).

Positions 1–145 (MTKRALISVS…KNHASVTVVV (145 aa)) constitute an MGS-like domain.

The protein belongs to the PurH family.

The enzyme catalyses (6R)-10-formyltetrahydrofolate + 5-amino-1-(5-phospho-beta-D-ribosyl)imidazole-4-carboxamide = 5-formamido-1-(5-phospho-D-ribosyl)imidazole-4-carboxamide + (6S)-5,6,7,8-tetrahydrofolate. It catalyses the reaction IMP + H2O = 5-formamido-1-(5-phospho-D-ribosyl)imidazole-4-carboxamide. The protein operates within purine metabolism; IMP biosynthesis via de novo pathway; 5-formamido-1-(5-phospho-D-ribosyl)imidazole-4-carboxamide from 5-amino-1-(5-phospho-D-ribosyl)imidazole-4-carboxamide (10-formyl THF route): step 1/1. It functions in the pathway purine metabolism; IMP biosynthesis via de novo pathway; IMP from 5-formamido-1-(5-phospho-D-ribosyl)imidazole-4-carboxamide: step 1/1. The chain is Bifunctional purine biosynthesis protein PurH from Streptococcus suis (strain 98HAH33).